Consider the following 547-residue polypeptide: CTP synthase (547 aa).

An amidoligase domain region spans residues Met-1–Ile-265. Position 13 (Ser-13) interacts with CTP. Position 13 (Ser-13) interacts with UTP. ATP is bound by residues Ser-14 to Leu-19 and Asp-71. Asp-71 and Glu-139 together coordinate Mg(2+). Residues Asp-146–Glu-148, Lys-186–Gln-191, and Lys-222 contribute to the CTP site. UTP-binding positions include Lys-186–Gln-191 and Lys-222. A Glutamine amidotransferase type-1 domain is found at Arg-291 to Leu-546. Gly-353 lines the L-glutamine pocket. The Nucleophile; for glutamine hydrolysis role is filled by Cys-380. L-glutamine contacts are provided by residues Leu-381–Gln-384, Glu-404, and Arg-474. Catalysis depends on residues His-519 and Glu-521.

The protein belongs to the CTP synthase family. Homotetramer.

The enzyme catalyses UTP + L-glutamine + ATP + H2O = CTP + L-glutamate + ADP + phosphate + 2 H(+). It carries out the reaction L-glutamine + H2O = L-glutamate + NH4(+). The catalysed reaction is UTP + NH4(+) + ATP = CTP + ADP + phosphate + 2 H(+). Its pathway is pyrimidine metabolism; CTP biosynthesis via de novo pathway; CTP from UDP: step 2/2. With respect to regulation, allosterically activated by GTP, when glutamine is the substrate; GTP has no effect on the reaction when ammonia is the substrate. The allosteric effector GTP functions by stabilizing the protein conformation that binds the tetrahedral intermediate(s) formed during glutamine hydrolysis. Inhibited by the product CTP, via allosteric rather than competitive inhibition. Catalyzes the ATP-dependent amination of UTP to CTP with either L-glutamine or ammonia as the source of nitrogen. Regulates intracellular CTP levels through interactions with the four ribonucleotide triphosphates. This chain is CTP synthase, found in Cereibacter sphaeroides (strain ATCC 17025 / ATH 2.4.3) (Rhodobacter sphaeroides).